Here is a 419-residue protein sequence, read N- to C-terminus: Creatine kinase S-type, mitochondrial (419 aa).

Residues 1-39 (MASAFSKLLTGRNASLLFTTLGTSALTTGYLLNRQKVSA) constitute a mitochondrion transit peptide. The segment at 40–64 (DAREQHKLFPPSADYPDLRKHNNCM) is cardiolipin-binding. The Phosphagen kinase N-terminal domain maps to 46 to 132 (KLFPPSADYP…FDPVIKLRHN (87 aa)). Residues 159–401 (YVLSSRVRTG…NYLVDCEKKL (243 aa)) form the Phosphagen kinase C-terminal domain. Residues 162 to 166 (SSRVR) and His225 contribute to the ATP site. Tyr255 is modified (phosphotyrosine). ATP-binding positions include Arg270, Arg326, 354–359 (RGTGGV), and Asp369. Thr356 is modified (phosphothreonine).

It belongs to the ATP:guanido phosphotransferase family. Exists as an octamer composed of four CKMT2 homodimers.

The protein resides in the mitochondrion inner membrane. The enzyme catalyses creatine + ATP = N-phosphocreatine + ADP + H(+). Functionally, reversibly catalyzes the transfer of phosphate between ATP and various phosphogens (e.g. creatine phosphate). Creatine kinase isoenzymes play a central role in energy transduction in tissues with large, fluctuating energy demands, such as skeletal muscle, heart, brain and spermatozoa. This chain is Creatine kinase S-type, mitochondrial (Ckmt2), found in Mus musculus (Mouse).